The primary structure comprises 483 residues: Jacalin-related lectin 13 (483 aa).

The tract at residues 1–20 is disordered; the sequence is MTQKLESVGSERKSSEYMWD. Jacalin-type lectin domains follow at residues 2–147, 150–295, and 307–461; these read TQKL…YVTW, PARM…YFTT, and FREK…YFFP.

It belongs to the jacalin lectin family.

This chain is Jacalin-related lectin 13 (JAL13), found in Arabidopsis thaliana (Mouse-ear cress).